The following is a 383-amino-acid chain: Chitinase-3-like protein 1 (383 aa).

Residues 1 to 21 (MGVKASQTGFVVLVLLQCCSA) form the signal peptide. The GH18 domain occupies 22–383 (YKLVCYYTSW…NAIKDALAAT (362 aa)). Cys26 and Cys51 are disulfide-bonded. Asn60 carries an N-linked (GlcNAc...) asparagine glycan. Chitin-binding positions include 70 to 71 (EW), 97 to 100 (GGWN), Tyr141, 204 to 207 (MTYD), and Arg263. Residues Cys300 and Cys364 are joined by a disulfide bond. The interval 324-338 (QWVGYDDQESVKSKV) is important for AKT1 activation and IL8 production. Chitin is bound at residue Trp352.

It belongs to the glycosyl hydrolase 18 family. In terms of assembly, monomer. Glycosylated. Present in activated macrophages, articular chondrocytes, synovial cells as well as in liver. Very low or undetectable expression in non-inflammatory colon. Undetectable in muscle tissues, lung, pancreas, mononuclear cells, or fibroblasts.

Its subcellular location is the secreted. The protein localises to the extracellular space. It localises to the cytoplasm. It is found in the perinuclear region. The protein resides in the endoplasmic reticulum. Carbohydrate-binding lectin with a preference for chitin. Has no chitinase activity. May play a role in tissue remodeling and in the capacity of cells to respond to and cope with changes in their environment. Plays a role in T-helper cell type 2 (Th2) inflammatory response and IL-13-induced inflammation, regulating allergen sensitization, inflammatory cell apoptosis, dendritic cell accumulation and M2 macrophage differentiation. Facilitates invasion of pathogenic enteric bacteria into colonic mucosa and lymphoid organs. Mediates activation of AKT1 signaling pathway and subsequent IL8 production in colonic epithelial cells. Regulates antibacterial responses in lung by contributing to macrophage bacterial killing, controlling bacterial dissemination and augmenting host tolerance. Also regulates hyperoxia-induced injury, inflammation and epithelial apoptosis in lung. This Homo sapiens (Human) protein is Chitinase-3-like protein 1 (CHI3L1).